We begin with the raw amino-acid sequence, 260 residues long: MGYSKRFALYISILILIVMVAGCGKSDETKEDSKEEQIKKSFAKTLDMYPIKNLEDLYDKEGYRDGEFKKGDKGTWVLYSAIVSQPKGESLKSRGMILKLDRNKRTAKGSYIIRELKEDKNHDVQKNEKKYPVKLVNNRIVLVKDVKDKKLKNEIESFELFSQYGNFNHFDRNEITNISYNPNAPNYSAEYKMKKNDRNIQQLKKRFNLKTSKTPKLLFKGSGDIKGSSVGYKEIEIIFSRSKEEAFIMLTALSSFQVTK.

The N-terminal stretch at 1–22 (MGYSKRFALYISILILIVMVAG) is a signal peptide. Cys-23 carries N-palmitoyl cysteine lipidation. Residue Cys-23 is the site of S-diacylglycerol cysteine attachment.

This sequence belongs to the staphylococcal tandem lipoprotein family.

It localises to the cell membrane. This is an uncharacterized protein from Staphylococcus aureus (strain N315).